The sequence spans 236 residues: SPbeta prophage-derived uncharacterized protein YomV (236 aa).

The polypeptide is SPbeta prophage-derived uncharacterized protein YomV (yomV) (Bacillus subtilis (strain 168)).